The primary structure comprises 676 residues: Basic proline-rich protein (676 aa).

Positions 1 to 16 (MLPILLSVALLALSSA) are cleaved as a signal peptide. A phosphoserine mark is found at Ser-28 and Ser-30. The disordered stretch occupies residues 29–676 (NSAEKFLRPP…PRPPPGPPPQ (648 aa)). Pro residues-rich tracts occupy residues 36–50 (RPPP…PPPE), 71–424 (GPAP…PPAD), and 442–676 (PPPA…PPPQ). Positions 409 to 457 (APPGARPPPPPPPPADEPQQGPAPSGDKPKKKPPPPAGPPPPGPPSPGP) are excised as a propeptide.

Acinar cells and secretory granules of the parotid gland.

The protein resides in the secreted. Its function is as follows. The parotid hormone stimulates dentinal fluid transport in teeth. The chain is Basic proline-rich protein from Sus scrofa (Pig).